We begin with the raw amino-acid sequence, 364 residues long: Caffeic acid 3-O-methyltransferase 2 (364 aa).

A substrate-binding site is contributed by 129–135 (MNQDKVL). The interval 161-179 (AFEYHGTDPRFNKVFNKGM) is substrate binding. S-adenosyl-L-methionine is bound by residues Gly-207, Asp-230, Asp-250, Met-251, and Lys-264. The active-site Proton acceptor is the His-268.

The protein belongs to the class I-like SAM-binding methyltransferase superfamily. Cation-independent O-methyltransferase family. COMT subfamily. In terms of assembly, homodimer.

It catalyses the reaction (E)-caffeate + S-adenosyl-L-methionine = (E)-ferulate + S-adenosyl-L-homocysteine + H(+). It participates in aromatic compound metabolism; phenylpropanoid biosynthesis. Catalyzes the conversion of caffeic acid to ferulic acid and of 5-hydroxyferulic acid to sinapic acid. The resulting products may subsequently be converted to the corresponding alcohols that are incorporated into lignins. The protein is Caffeic acid 3-O-methyltransferase 2 (OMT2) of Populus tremuloides (Quaking aspen).